Reading from the N-terminus, the 295-residue chain is Pyridoxal 5'-phosphate synthase subunit PdxS (295 aa).

Asp-25 serves as a coordination point for D-ribose 5-phosphate. Lys-82 functions as the Schiff-base intermediate with D-ribose 5-phosphate in the catalytic mechanism. Gly-154 contributes to the D-ribose 5-phosphate binding site. D-glyceraldehyde 3-phosphate is bound at residue Arg-166. Residues Gly-215 and Gly-236–Ser-237 contribute to the D-ribose 5-phosphate site.

The protein belongs to the PdxS/SNZ family. In the presence of PdxT, forms a dodecamer of heterodimers.

It catalyses the reaction aldehydo-D-ribose 5-phosphate + D-glyceraldehyde 3-phosphate + L-glutamine = pyridoxal 5'-phosphate + L-glutamate + phosphate + 3 H2O + H(+). It participates in cofactor biosynthesis; pyridoxal 5'-phosphate biosynthesis. Functionally, catalyzes the formation of pyridoxal 5'-phosphate from ribose 5-phosphate (RBP), glyceraldehyde 3-phosphate (G3P) and ammonia. The ammonia is provided by the PdxT subunit. Can also use ribulose 5-phosphate and dihydroxyacetone phosphate as substrates, resulting from enzyme-catalyzed isomerization of RBP and G3P, respectively. This chain is Pyridoxal 5'-phosphate synthase subunit PdxS, found in Haemophilus ducreyi (strain 35000HP / ATCC 700724).